We begin with the raw amino-acid sequence, 528 residues long: Lysine--tRNA ligase (528 aa).

The 'HIGH' region motif lies at 44–52 (PSGLPHIGT). Residues 290–294 (KISKS) carry the 'KMSKS' region motif. K293 serves as a coordination point for ATP.

Belongs to the class-I aminoacyl-tRNA synthetase family.

It is found in the cytoplasm. It carries out the reaction tRNA(Lys) + L-lysine + ATP = L-lysyl-tRNA(Lys) + AMP + diphosphate. The polypeptide is Lysine--tRNA ligase (lysS) (Rickettsia prowazekii (strain Madrid E)).